A 222-amino-acid chain; its full sequence is uncharacterized protein (222 aa).

The tract at residues 142–222 (ARRGGCVHPP…LPDPPSAGHL (81 aa)) is disordered. Residues 160–169 (QSRSISSRRA) show a composition bias toward low complexity. Residues 182–196 (PRRRPHRHRTRPQTR) are compositionally biased toward basic residues.

Belongs to the Rv1128c/1148c/1588c/1702c/1945/3466 family.

This is an uncharacterized protein from Mycobacterium tuberculosis (strain CDC 1551 / Oshkosh).